The chain runs to 211 residues: Orotate phosphoribosyltransferase (211 aa).

Residues Arg-103, Lys-107, His-109, and Glu-129–Ser-137 contribute to the 5-phospho-alpha-D-ribose 1-diphosphate site. Ser-133 contacts orotate.

This sequence belongs to the purine/pyrimidine phosphoribosyltransferase family. PyrE subfamily. As to quaternary structure, homodimer. It depends on Mg(2+) as a cofactor.

It carries out the reaction orotidine 5'-phosphate + diphosphate = orotate + 5-phospho-alpha-D-ribose 1-diphosphate. Its pathway is pyrimidine metabolism; UMP biosynthesis via de novo pathway; UMP from orotate: step 1/2. In terms of biological role, catalyzes the transfer of a ribosyl phosphate group from 5-phosphoribose 1-diphosphate to orotate, leading to the formation of orotidine monophosphate (OMP). This Fusobacterium nucleatum subsp. nucleatum (strain ATCC 25586 / DSM 15643 / BCRC 10681 / CIP 101130 / JCM 8532 / KCTC 2640 / LMG 13131 / VPI 4355) protein is Orotate phosphoribosyltransferase.